The following is a 300-amino-acid chain: Acetaldehyde dehydrogenase 1 (300 aa).

11–14 (SGNI) contributes to the NAD(+) binding site. The active-site Acyl-thioester intermediate is the cysteine 126. NAD(+) is bound by residues 157–165 (SAGPGTRAN) and asparagine 276.

This sequence belongs to the acetaldehyde dehydrogenase family.

The catalysed reaction is acetaldehyde + NAD(+) + CoA = acetyl-CoA + NADH + H(+). The polypeptide is Acetaldehyde dehydrogenase 1 (Rhodococcus erythropolis (strain PR4 / NBRC 100887)).